The sequence spans 114 residues: MIKNTGHRKLGKTGSHRRAMLNNMATSIILHEQVETTVAKAKEVRRVVDNLVTLAKNGQNLQVKDTLKDKVAYKKLFEVLASRYEKRPGGFTRIYRAGKRPGDNAEVAIIKLVD.

The protein belongs to the bacterial ribosomal protein bL17 family. Part of the 50S ribosomal subunit. Contacts protein L32.

In Elusimicrobium minutum (strain Pei191), this protein is Large ribosomal subunit protein bL17.